The sequence spans 488 residues: UDP-N-acetylmuramate--L-alanine ligase (488 aa).

127 to 133 contacts ATP; it reads GTHGKTT.

The protein belongs to the MurCDEF family.

It localises to the cytoplasm. The catalysed reaction is UDP-N-acetyl-alpha-D-muramate + L-alanine + ATP = UDP-N-acetyl-alpha-D-muramoyl-L-alanine + ADP + phosphate + H(+). Its pathway is cell wall biogenesis; peptidoglycan biosynthesis. In terms of biological role, cell wall formation. The protein is UDP-N-acetylmuramate--L-alanine ligase of Shewanella sp. (strain ANA-3).